We begin with the raw amino-acid sequence, 337 residues long: Peroxidase 14 (337 aa).

Residues 1 to 22 (MARIGSFLILLSLTYALTLCIC) form the signal peptide. The N-linked (GlcNAc...) asparagine glycan is linked to Asn24. Intrachain disulfides connect Cys44/Cys124, Cys77/Cys82, Cys130/Cys331, and Cys209/Cys241. His75 acts as the Proton acceptor in catalysis. The Ca(2+) site is built by Asp76, Val79, Gly81, Asp83, and Ser85. Pro172 serves as a coordination point for substrate. An N-linked (GlcNAc...) asparagine glycan is attached at Asn191. His202 contacts heme b. Thr203 lines the Ca(2+) pocket. Residues Asn218 and Asn249 are each glycosylated (N-linked (GlcNAc...) asparagine). Residues Asp254, Ser257, and Asp262 each coordinate Ca(2+).

Belongs to the peroxidase family. Classical plant (class III) peroxidase subfamily. The cofactor is heme b. It depends on Ca(2+) as a cofactor.

It localises to the secreted. It catalyses the reaction 2 a phenolic donor + H2O2 = 2 a phenolic radical donor + 2 H2O. In terms of biological role, removal of H(2)O(2), oxidation of toxic reductants, biosynthesis and degradation of lignin, suberization, auxin catabolism, response to environmental stresses such as wounding, pathogen attack and oxidative stress. These functions might be dependent on each isozyme/isoform in each plant tissue. The chain is Peroxidase 14 (PER14) from Arabidopsis thaliana (Mouse-ear cress).